The following is a 277-amino-acid chain: Myelin proteolipid protein (277 aa).

Over 1 to 10 (MGLLECCARC) the chain is Cytoplasmic. 3 S-palmitoyl cysteine lipidation sites follow: Cys6, Cys7, and Cys10. A helical membrane pass occupies residues 11–36 (LVGAPFASLVATGLCFFGVALFCGCG). Over 37–59 (HEALTGTEKLIETYFSKNYQDYE) the chain is Extracellular. Residues 60 to 88 (YLINVIHAFQYVIYGTASFFFLYGALLLA) form a helical membrane-spanning segment. The Cytoplasmic portion of the chain corresponds to 89–151 (EGFYTTGAVR…LGKWLGHPDK (63 aa)). Cys109 carries S-palmitoyl cysteine lipidation. Ser114 carries the post-translational modification Phosphoserine. Residues Thr116 and Thr118 each carry the phosphothreonine modification. 2 S-palmitoyl cysteine lipidation sites follow: Cys139 and Cys141. The chain crosses the membrane as a helical span at residues 152–178 (FVGITYALTVVWLLVFACSAVPVYIYF). Topologically, residues 179–238 (NTWTTCQSIAFPSKTSASIGTLCADARMYGVLPWNAFPGKVCGSNLLSICKTAEFQMTFH) are extracellular. 2 cysteine pairs are disulfide-bonded: Cys184-Cys228 and Cys201-Cys220. Residue Thr199 is the site of O-palmitoyl threonine attachment. A helical membrane pass occupies residues 239 to 268 (LFIAAFVGAAATLVSLLTFMIAATYNFAVL). Over 269–277 (KLMGRGTKF) the chain is Cytoplasmic.

It belongs to the myelin proteolipid protein family. As to quaternary structure, interacts with MAL.

The protein resides in the cell membrane. It localises to the myelin membrane. Its function is as follows. This is the major myelin protein from the central nervous system. It plays an important role in the formation or maintenance of the multilamellar structure of myelin. The polypeptide is Myelin proteolipid protein (PLP1) (Oryctolagus cuniculus (Rabbit)).